The following is a 397-amino-acid chain: Putative gustatory receptor 85a (397 aa).

Residues 1–56 (MYSLIEAQLLGGKLVNRVMASLRRIIQRSLGYFCALNGILDFNTDIGTGNLRRYRV) lie on the Cytoplasmic side of the membrane. The chain crosses the membrane as a helical span at residues 57 to 77 (LFMYRLLHNFAVISLTLKFLF). The Extracellular portion of the chain corresponds to 78-90 (DFTDHFKYIESST). The helical transmembrane segment at 91 to 111 (LITVNFFTYFTLVFFALLSSM) threads the bilayer. Residues 112–151 (GSCYQWQNRILAVLKELKHQRDLSRHMGYRVPRSKQNSID) lie on the Cytoplasmic side of the membrane. Residues 152–172 (YLLFALTVLLILRLSIHLATF) form a helical membrane-spanning segment. At 173-186 (TLSARMGFNHPCNC) the chain is on the extracellular side. Residues 187 to 207 (FLPECMIFSMNYLLFAILAEI) traverse the membrane as a helical segment. Over 208–268 (TRCWWSLQSG…RYVTLAYMAR (61 aa)) the chain is Cytoplasmic. A helical membrane pass occupies residues 269-289 (NLWSGIVAGYLLVRFVIGNGL). Residues 290-293 (QDVE) are Extracellular-facing. Residues 294–314 (LVYLVFSFITCIQPLMLSLLV) traverse the membrane as a helical segment. At 315 to 375 (NSMTSTTGSL…FRINRSLAFR (61 aa)) the chain is on the cytoplasmic side. A helical transmembrane segment spans residues 376–396 (SASLILVHVLYMVQSDYISIT). Residue N397 is a topological domain, extracellular.

It belongs to the insect chemoreceptor superfamily. Gustatory receptor (GR) family. Gr22e subfamily.

It localises to the cell membrane. In terms of biological role, probable gustatory receptor which mediates acceptance or avoidance behavior, depending on its substrates. The polypeptide is Putative gustatory receptor 85a (Gr85a) (Drosophila melanogaster (Fruit fly)).